Consider the following 158-residue polypeptide: Small ribosomal subunit protein uS9 (158 aa).

The protein belongs to the universal ribosomal protein uS9 family.

This is Small ribosomal subunit protein uS9 from Brucella canis (strain ATCC 23365 / NCTC 10854 / RM-666).